Consider the following 285-residue polypeptide: Putative hydrolase DDAH2 (285 aa).

His-171 serves as the catalytic Proton donor. Residue Cys-276 is the Nucleophile of the active site.

Belongs to the DDAH family. Phosphorylated by TBK1. Phosphorylation inhibits the translocation into the mitochondrion upon Sendai viral infection. Detected in heart, placenta, lung, liver, skeletal muscle, kidney and pancreas, and at very low levels in brain.

It is found in the cytoplasm. The protein localises to the mitochondrion. Functionally, putative hydrolase with unknown substrate. Does not hydrolyze N(G),N(G)-dimethyl-L-arginine (ADMA) which acts as an inhibitor of NOS. In endothelial cells, induces expression of vascular endothelial growth factor (VEGF) via phosphorylation of the transcription factor SP1 by PKA in a process that is independent of NO and NO synthase. Similarly, enhances pancreatic insulin secretion through SP1-mediated transcriptional up-regulation of secretagogin/SCGN, an insulin vesicle docking protein. Upon viral infection, relocates to mitochondria where it promotes mitochondrial fission through activation of DNM1L leading to the inhibition of innate response activation mediated by MAVS. This is Putative hydrolase DDAH2 from Homo sapiens (Human).